The sequence spans 392 residues: O-phospho-L-seryl-tRNA:Cys-tRNA synthase 1 (392 aa).

Pyridoxal 5'-phosphate contacts are provided by residues 85–86, Asn-190, and 213–215; these read AR and SGH. The residue at position 216 (Lys-216) is an N6-(pyridoxal phosphate)lysine.

This sequence belongs to the SepCysS family. Homodimer. Interacts with SepRS. The cofactor is pyridoxal 5'-phosphate.

The catalysed reaction is O-phospho-L-seryl-tRNA(Cys) + hydrogen sulfide + H(+) = L-cysteinyl-tRNA(Cys) + phosphate. Its function is as follows. Converts O-phospho-L-seryl-tRNA(Cys) (Sep-tRNA(Cys)) to L-cysteinyl-tRNA(Cys) (Cys-tRNA(Cys)). In Methanoregula boonei (strain DSM 21154 / JCM 14090 / 6A8), this protein is O-phospho-L-seryl-tRNA:Cys-tRNA synthase 1.